Here is a 296-residue protein sequence, read N- to C-terminus: Glycine--tRNA ligase alpha subunit (296 aa).

This sequence belongs to the class-II aminoacyl-tRNA synthetase family. In terms of assembly, tetramer of two alpha and two beta subunits.

The protein localises to the cytoplasm. The enzyme catalyses tRNA(Gly) + glycine + ATP = glycyl-tRNA(Gly) + AMP + diphosphate. The chain is Glycine--tRNA ligase alpha subunit from Desulfitobacterium hafniense (strain Y51).